The chain runs to 467 residues: MGGAEDAPRAAAANGHGNGATVEEKLDELRRLLGKADGDPLRIVGVGAGAWGSVFCALMQDAYGHLRDKVQVRIWRRPGRAVDRATAEHLFEVINAREDVLRRLIRRCAYLKYVEGRLGDRTLYADEILRDGFCLNMIDTPLCPLKVVTNLQEAVWDADIVINGLPSTDTREVFGEIGRYWKERITAPIILSLAKGIEASLDPLPRIITPTQMISNATGVPLENILYLGGPNIASEIYNKEYANARICGADKWRKPLAKFLRQPHFIVWDNSDLITHEVMGGLKNVYAIGAGMVAALTNESATSKSVYFALCTSEMIYITHLLEEEPEKLAGPLLADTYVTLLKGRNAWYGQKLAKGELTLEMGDSIKGKGTIQGVSAVNAFYELLSQDSLSVMHPEANRSVAPVEMCPILKALYKILIKRELPPDSILQAIRDETMYDPRERIEMAQGHSLYRPSLLGQPKGDAKA.

NAD(+)-binding positions include 47–52 (GAGAWG), Lys-195, and Ala-234. Lys-195 provides a ligand contact to substrate. Catalysis depends on Lys-284, which acts as the Proton acceptor. NAD(+)-binding residues include Arg-346 and Gln-374. 346-347 (RN) provides a ligand contact to substrate.

It belongs to the NAD-dependent glycerol-3-phosphate dehydrogenase family.

It is found in the cytoplasm. The protein localises to the cytosol. The enzyme catalyses sn-glycerol 3-phosphate + NAD(+) = dihydroxyacetone phosphate + NADH + H(+). Functionally, may be involved in cell redox homeostasis. This is Probable glycerol-3-phosphate dehydrogenase [NAD(+)] 2, cytosolic from Oryza sativa subsp. japonica (Rice).